A 396-amino-acid chain; its full sequence is Elongation factor Tu (396 aa).

Residues 10–205 (KPHVNIGTIG…ACDDNIPDPV (196 aa)) enclose the tr-type G domain. The tract at residues 19–26 (GHVDHGKT) is G1. 19–26 (GHVDHGKT) is a binding site for GTP. Position 26 (Thr-26) interacts with Mg(2+). The segment at 62-66 (GITIN) is G2. The interval 83-86 (DAPG) is G3. GTP is bound by residues 83 to 87 (DAPGH) and 138 to 141 (NKCD). The G4 stretch occupies residues 138–141 (NKCD). The G5 stretch occupies residues 175–177 (SAL).

Belongs to the TRAFAC class translation factor GTPase superfamily. Classic translation factor GTPase family. EF-Tu/EF-1A subfamily. As to quaternary structure, monomer.

The protein localises to the cytoplasm. The catalysed reaction is GTP + H2O = GDP + phosphate + H(+). Functionally, GTP hydrolase that promotes the GTP-dependent binding of aminoacyl-tRNA to the A-site of ribosomes during protein biosynthesis. In Corynebacterium glutamicum (strain R), this protein is Elongation factor Tu.